The sequence spans 466 residues: ATP synthase subunit beta (466 aa).

156–163 is a binding site for ATP; the sequence is GGAGVGKT.

The protein belongs to the ATPase alpha/beta chains family. F-type ATPases have 2 components, CF(1) - the catalytic core - and CF(0) - the membrane proton channel. CF(1) has five subunits: alpha(3), beta(3), gamma(1), delta(1), epsilon(1). CF(0) has three main subunits: a(1), b(2) and c(9-12). The alpha and beta chains form an alternating ring which encloses part of the gamma chain. CF(1) is attached to CF(0) by a central stalk formed by the gamma and epsilon chains, while a peripheral stalk is formed by the delta and b chains.

The protein localises to the cell membrane. The catalysed reaction is ATP + H2O + 4 H(+)(in) = ADP + phosphate + 5 H(+)(out). Its function is as follows. Produces ATP from ADP in the presence of a proton gradient across the membrane. The catalytic sites are hosted primarily by the beta subunits. This is ATP synthase subunit beta from Polynucleobacter asymbioticus (strain DSM 18221 / CIP 109841 / QLW-P1DMWA-1) (Polynucleobacter necessarius subsp. asymbioticus).